An 84-amino-acid polypeptide reads, in one-letter code: Small ribosomal subunit protein bS18 (84 aa).

The protein belongs to the bacterial ribosomal protein bS18 family. In terms of assembly, part of the 30S ribosomal subunit. Forms a tight heterodimer with protein bS6.

Its function is as follows. Binds as a heterodimer with protein bS6 to the central domain of the 16S rRNA, where it helps stabilize the platform of the 30S subunit. This chain is Small ribosomal subunit protein bS18, found in Mycoplasma mobile (strain ATCC 43663 / 163K / NCTC 11711) (Mesomycoplasma mobile).